Consider the following 858-residue polypeptide: Neural cell adhesion molecule 1 (858 aa).

Positions 1–19 are cleaved as a signal peptide; that stretch reads MLQTKDLIWTLFFLGTAVS. 5 consecutive Ig-like C2-type domains span residues 20–111, 116–205, 212–301, 308–413, and 416–501; these read LQVD…ATVN, QKLM…KDIQ, PTIQ…ATIH, PKIT…LEVQ, and PKLQ…ESLE. Residues 20–718 are Extracellular-facing; sequence LQVDIVPSQG…IPANGSPTSG (699 aa). Intrachain disulfides connect Cys41-Cys96 and Cys139-Cys189. N-linked (GlcNAc...) asparagine glycosylation occurs at Asn222. An intrachain disulfide couples Cys235 to Cys287. 5 N-linked (GlcNAc...) asparagine glycosylation sites follow: Asn315, Asn347, Asn433, Asn459, and Asn488. A disulfide bridge connects residues Cys329 and Cys395. Residues Cys436 and Cys489 are joined by a disulfide bond. Fibronectin type-III domains follow at residues 509 to 608 and 611 to 706; these read TPSS…TQPV and EPSA…SAQP. The GPI-anchor amidated asparagine moiety is linked to residue Pro706. A helical membrane pass occupies residues 719–739; that stretch reads LSTGAIVGILIVIFVLLLVVV. The Cytoplasmic segment spans residues 740–858; that stretch reads DITCYFLNKC…TQTKENESKA (119 aa). The GPI-anchor amidated asparagine moiety is linked to residue Ile741. Residues 766-858 form a disordered region; sequence GAKGKDMEEG…TQTKENESKA (93 aa). Composition is skewed to basic and acidic residues over residues 768 to 809 and 817 to 834; these read KGKD…HTEP and EPEK…ETET. A phosphoserine mark is found at Ser780 and Ser784.

As to quaternary structure, (Microbial infection) Interacts with rabies virus glycoprotein. In terms of assembly, (Microbial infection) Interacts with Zika virus envelope protein E. Interacts with MDK. Found in a complex with SLC39A6, SLC39A10 and with NCAM1; this complex controls NCAM1 phosphorylation and integration into focal adhesion complexes during epithelial-tomesenchymal transition. Interacts with synaptic plasticity regulator PANTS. Post-translationally, polysialylated at Asn-459 and Asn-488 by ST8SIA2 and ST8SIA4. Polysialylation modulates cell interactions by confering both attractive and repulsive properties that are highly regulated by ST8SIA2 and ST8SIA4. Polysialylation is formed on a-2,3-linked sialic acid of core glycans.

It is found in the cell membrane. It localises to the secreted. Functionally, this protein is a cell adhesion molecule involved in neuron-neuron adhesion, neurite fasciculation, outgrowth of neurites, etc. Its function is as follows. (Microbial infection) Acts as a receptor for rabies virus. In terms of biological role, (Microbial infection) Acts as a receptor for Zika virus. This is Neural cell adhesion molecule 1 from Homo sapiens (Human).